A 317-amino-acid chain; its full sequence is Ubiquinone biosynthesis protein COQ9, mitochondrial (317 aa).

A mitochondrion-targeting transit peptide spans 1–46 (MAASVARVLKAAGGRQLLLMVARRRPVLRQPFLLMPRKFWGTSALR). Residues 45-97 (LRSEDQKQPPFSSTSAHAGTPEHAEEQYQQQQPPPRYTDQAGEESEGYESEEQ) are disordered. Positions 85–96 (AGEESEGYESEE) are enriched in acidic residues. R243 contacts a 1,2-diacylglycero-3-phosphoethanolamine.

Belongs to the COQ9 family. In terms of assembly, homodimer. Heterodimer; two heterodimers of COQ7:COQ9 come together on the same side of the lipid pseudo-bilayer and form a curved tetramer with a hydrophobic surface suitable for membrane interaction. These two tetramers assemble into a soluble octamer with a pseudo-bilayer of lipids captured within. Interacts with COQ7; this interaction allows ubiquinone (CoQ) isoprene intermediates presentation to COQ7 and facilitates the COQ7-mediated hydroxylase step.

Its subcellular location is the mitochondrion. The protein operates within cofactor biosynthesis; ubiquinone biosynthesis. In terms of biological role, membrane-associated protein that warps the membrane surface to access and bind aromatic isoprenes with high specificity, including ubiquinone (CoQ) isoprene intermediates and presents them directly to COQ7, therefore facilitating the COQ7-mediated hydroxylase step. Participates in the biosynthesis of coenzyme Q, also named ubiquinone, an essential lipid-soluble electron transporter for aerobic cellular respiration. The protein is Ubiquinone biosynthesis protein COQ9, mitochondrial of Xenopus tropicalis (Western clawed frog).